We begin with the raw amino-acid sequence, 92 residues long: Small ribosomal subunit protein uS19 (92 aa).

Belongs to the universal ribosomal protein uS19 family.

In terms of biological role, protein S19 forms a complex with S13 that binds strongly to the 16S ribosomal RNA. This Rickettsia canadensis (strain McKiel) protein is Small ribosomal subunit protein uS19.